A 26-amino-acid polypeptide reads, in one-letter code: Phospholipase A2 homolog A1 (26 aa).

Post-translationally, contains 7 disulfide bonds. As to expression, expressed by the venom gland.

The protein resides in the secreted. This Micrurus pyrrhocryptus (Coral snake) protein is Phospholipase A2 homolog A1.